Reading from the N-terminus, the 227-residue chain is ATP synthase F(0) complex subunit a (227 aa).

A run of 6 helical transmembrane segments spans residues 14 to 34 (LLGH…FPSP), 69 to 89 (WALM…LGLL), 98 to 118 (QLSM…LTGL), 139 to 159 (IPAL…ALGV), 167 to 187 (AGHL…PILP), and 190 to 210 (SILT…VAMI).

Belongs to the ATPase A chain family. Component of the ATP synthase complex composed at least of ATP5F1A/subunit alpha, ATP5F1B/subunit beta, ATP5MC1/subunit c (homooctomer), MT-ATP6/subunit a, MT-ATP8/subunit 8, ATP5ME/subunit e, ATP5MF/subunit f, ATP5MG/subunit g, ATP5MK/subunit k, ATP5MJ/subunit j, ATP5F1C/subunit gamma, ATP5F1D/subunit delta, ATP5F1E/subunit epsilon, ATP5PF/subunit F6, ATP5PB/subunit b, ATP5PD/subunit d, ATP5PO/subunit OSCP. ATP synthase complex consists of a soluble F(1) head domain (subunits alpha(3) and beta(3)) - the catalytic core - and a membrane F(0) domain - the membrane proton channel (subunits c, a, 8, e, f, g, k and j). These two domains are linked by a central stalk (subunits gamma, delta, and epsilon) rotating inside the F1 region and a stationary peripheral stalk (subunits F6, b, d, and OSCP). Interacts with DNAJC30; interaction is direct.

It is found in the mitochondrion inner membrane. It carries out the reaction H(+)(in) = H(+)(out). In terms of biological role, subunit a, of the mitochondrial membrane ATP synthase complex (F(1)F(0) ATP synthase or Complex V) that produces ATP from ADP in the presence of a proton gradient across the membrane which is generated by electron transport complexes of the respiratory chain. ATP synthase complex consist of a soluble F(1) head domain - the catalytic core - and a membrane F(1) domain - the membrane proton channel. These two domains are linked by a central stalk rotating inside the F(1) region and a stationary peripheral stalk. During catalysis, ATP synthesis in the catalytic domain of F(1) is coupled via a rotary mechanism of the central stalk subunits to proton translocation. With the subunit c (ATP5MC1), forms the proton-conducting channel in the F(0) domain, that contains two crucial half-channels (inlet and outlet) that facilitate proton movement from the mitochondrial intermembrane space (IMS) into the matrix. Protons are taken up via the inlet half-channel and released through the outlet half-channel, following a Grotthuss mechanism. This chain is ATP synthase F(0) complex subunit a, found in Anas platyrhynchos (Mallard).